The primary structure comprises 152 residues: Large ribosomal subunit protein uL15 (152 aa).

Residues 1–13 show a composition bias toward polar residues; sequence MLTLGNLSPQEGS. The tract at residues 1-62 is disordered; it reads MLTLGNLSPQ…GGQMPLQRRL (62 aa). Basic residues predominate over residues 31–40; that stretch reads TAGRGHKGFK.

This sequence belongs to the universal ribosomal protein uL15 family. In terms of assembly, part of the 50S ribosomal subunit.

Functionally, binds to the 23S rRNA. This Desulfotalea psychrophila (strain LSv54 / DSM 12343) protein is Large ribosomal subunit protein uL15.